Here is a 316-residue protein sequence, read N- to C-terminus: Taste receptor type 2 member 109 (316 aa).

Residues 1 to 14 (MEHLLKRTFDITEN) lie on the Extracellular side of the membrane. The helical transmembrane segment at 15-35 (ILLIILFIELIIGLIGNGFTA) threads the bilayer. Residues 36 to 62 (LVHCMDWVKRKKMSLVNKILTALATSR) lie on the Cytoplasmic side of the membrane. The helical transmembrane segment at 63–83 (IFLLWFMLVGFPISSLYPYLV) threads the bilayer. The Extracellular portion of the chain corresponds to 84–94 (TTRLMIQFTST). The helical transmembrane segment at 95-115 (LWTIANHISVWFATCLSVFYF) threads the bilayer. Residues 116–135 (LKIANFSNSPFLYLKRRVEK) lie on the Cytoplasmic side of the membrane. A helical membrane pass occupies residues 136 to 156 (VVSVTLLVSLVLLFLNILLLN). Over 157 to 191 (LEINMCINEYHQINISYIFISYYHLSCQIQVLGSH) the chain is Extracellular. The N-linked (GlcNAc...) asparagine glycan is linked to N170. A helical transmembrane segment spans residues 192-212 (IIFLSVPVVLSLSTFLLLIFS). The Cytoplasmic segment spans residues 213 to 241 (LWTLHKRMQQHVQGGRDARTTAHFKALQA). A helical transmembrane segment spans residues 242-262 (VIAFLLLYSIFILSLLLQFWI). At 263-270 (HGLRKKPP) the chain is on the extracellular side. A helical transmembrane segment spans residues 271 to 291 (FIAFCQVVDTAFPSFHSYVLI). The Cytoplasmic segment spans residues 292-316 (LRDRKLRHASLSVLSWLKCRPNYVK).

The protein belongs to the G-protein coupled receptor T2R family.

The protein localises to the membrane. Putative taste receptor which may play a role in the perception of bitterness. This Mus musculus (Mouse) protein is Taste receptor type 2 member 109.